The primary structure comprises 304 residues: MARTDDDTWDLATSVGATATMVAAGRARATRDGLIDDPFAEPLVRAVGVDFFTRWAAGELDAADVDVPGAAWGMQRMTDMITARTRYIDAFFAEAGAAGIRQVVILASGLDARAYRLPWPAGTTVFEIDQPRVLEFKAATIAQLGAEPTAPVRAVAVDLRHDWPSALRQAGFDVGRPAAWAAEGLLGFLPPQAQDRLLDNVTALSADGSQLVAEVFANTGASGDALNAAGEKWRRHGLDVALDDLGFPGERNDPASYLQQLGWQPVRTPLNQMLANNGLPLQSTEPGAPFAQNYYCTAVLNKAG.

Residues D129 and D158–L159 contribute to the S-adenosyl-L-methionine site.

This sequence belongs to the UPF0677 family.

Exhibits S-adenosyl-L-methionine-dependent methyltransferase activity. The chain is Putative S-adenosyl-L-methionine-dependent methyltransferase MAV_4236 from Mycobacterium avium (strain 104).